Consider the following 142-residue polypeptide: Protein spalt-accessory (142 aa).

The N-terminal stretch at 1 to 16 is a signal peptide; sequence MKLLIALFVLVNAVIA. Positions 65–77 are enriched in gly residues; the sequence is GQGGVSPGQGGFA. The tract at residues 65 to 142 is disordered; sequence GQGGVSPGQG…HHEHHGHHRH (78 aa). Positions 112–124 are enriched in basic and acidic residues; it reads NHHEYPEHHGDHH. A compositionally biased stretch (basic residues) spans 125 to 142; it reads REHHEHHGHHEHHGHHRH.

It is found in the secreted. Functionally, likely to be involved in the establishment of the head. This Drosophila orena (Fruit fly) protein is Protein spalt-accessory (sala).